A 327-amino-acid polypeptide reads, in one-letter code: Undecaprenyl-phosphate 4-deoxy-4-formamido-L-arabinose transferase (327 aa).

Residues 1 to 235 lie on the Cytoplasmic side of the membrane; it reads MFDAAPIKKV…TCLTTTPLRL (235 aa). A helical membrane pass occupies residues 236–256; the sequence is LSLLGSVIAIGGFSLSVLLIV. The Periplasmic segment spans residues 257-269; sequence LRLALGPQWAAEG. The helical transmembrane segment at 270-290 threads the bilayer; that stretch reads VFMLFAVLFTFIGAQFIGMGL. Residues 291–327 lie on the Cytoplasmic side of the membrane; it reads LGEYIGRIYNDVRARPRYFVQQVIYPESTSFTEESHQ.

It belongs to the glycosyltransferase 2 family.

Its subcellular location is the cell inner membrane. It catalyses the reaction UDP-4-deoxy-4-formamido-beta-L-arabinose + di-trans,octa-cis-undecaprenyl phosphate = 4-deoxy-4-formamido-alpha-L-arabinopyranosyl di-trans,octa-cis-undecaprenyl phosphate + UDP. It participates in glycolipid biosynthesis; 4-amino-4-deoxy-alpha-L-arabinose undecaprenyl phosphate biosynthesis; 4-amino-4-deoxy-alpha-L-arabinose undecaprenyl phosphate from UDP-4-deoxy-4-formamido-beta-L-arabinose and undecaprenyl phosphate: step 1/2. Its pathway is bacterial outer membrane biogenesis; lipopolysaccharide biosynthesis. Catalyzes the transfer of 4-deoxy-4-formamido-L-arabinose from UDP to undecaprenyl phosphate. The modified arabinose is attached to lipid A and is required for resistance to polymyxin and cationic antimicrobial peptides. This Salmonella paratyphi A (strain ATCC 9150 / SARB42) protein is Undecaprenyl-phosphate 4-deoxy-4-formamido-L-arabinose transferase.